The chain runs to 564 residues: Potassium-transporting ATPase potassium-binding subunit (564 aa).

The next 10 helical transmembrane spans lie at 7–27 (LLILAFLVLLLAPAPWLGRFF), 67–87 (AWALLAFNLAGFVVLFAMLML), 135–155 (VGLTVQNFVSAATGLAVLVAL), 179–199 (LYALLPISIVLAVFLVWQGVP), 258–278 (FELVSILLIPAALVFTFGHYV), 286–306 (AILGCMLALLLIGGAVSLWAE), 382–402 (VGLNGMVLNVLIAVFLAGLMI), 420–440 (LLVATLLVMPVGVLVLGAIAA), 487–507 (LMLSLAIFIGRFGYILPVLAL), and 528–548 (GLLFVTLLTVTILLVGGLTFL).

It belongs to the KdpA family. The system is composed of three essential subunits: KdpA, KdpB and KdpC.

The protein localises to the cell inner membrane. Functionally, part of the high-affinity ATP-driven potassium transport (or Kdp) system, which catalyzes the hydrolysis of ATP coupled with the electrogenic transport of potassium into the cytoplasm. This subunit binds the periplasmic potassium ions and delivers the ions to the membrane domain of KdpB through an intramembrane tunnel. This chain is Potassium-transporting ATPase potassium-binding subunit, found in Pseudomonas syringae pv. tomato (strain ATCC BAA-871 / DC3000).